A 115-amino-acid polypeptide reads, in one-letter code: T cell receptor delta variable 1 (115 aa).

Positions Met1–Ala21 are cleaved as a signal peptide. Positions Gln22 to Glu115 constitute an Ig-like domain. Cysteines 43 and 111 form a disulfide.

As to quaternary structure, gamma-delta TR is a heterodimer composed of a gamma and delta chain; disulfide-linked. The gamma-delta TR is associated with the transmembrane signaling CD3 coreceptor proteins following the stoichiometry: a single gamma-delta TR heterodimer associates with one CD3D-CD3E heterodimer, one CD3G-CD3E heterodimer and one CD247 homodimer forming a stable octameric structure. Upon activation, gamma-delta TR complex associates with FCER1G to initiate intracellular signaling.

It is found in the cell membrane. Functionally, v region of the variable domain of T cell receptor (TR) delta chain that participates in the antigen recognition. Gamma-delta TRs recognize a variety of self and foreign non-peptide antigens frequently expressed at the epithelial boundaries between the host and external environment, including endogenous lipids presented by MH-like protein CD1D and phosphoantigens presented by butyrophilin-like molecule BTN3A1. Upon antigen recognition induces rapid, innate-like immune responses involved in pathogen clearance and tissue repair. Binding of gamma-delta TR complex to antigen triggers phosphorylation of immunoreceptor tyrosine-based activation motifs (ITAMs) in the CD3 chains by the LCK and FYN kinases, allowing the recruitment, phosphorylation, and activation of ZAP70 that facilitates phosphorylation of the scaffolding proteins LCP2 and LAT. This lead to the formation of a supramolecular signalosome that recruits the phospholipase PLCG1, resulting in calcium mobilization and ERK activation, ultimately leading to T cell expansion and differentiation into effector cells. Gamma-delta TRs are produced through somatic rearrangement of a limited repertoire of variable (V), diversity (D), and joining (J) genes. The potential diversity of gamma-delta TRs is conferred by the unique ability to rearrange (D) genes in tandem and to utilize all three reading frames. The combinatorial diversity is considerably increased by the sequence exonuclease trimming and random nucleotide (N) region additions which occur during the V-(D)-J rearrangements. This Homo sapiens (Human) protein is T cell receptor delta variable 1.